Consider the following 90-residue polypeptide: DNA-directed RNA polymerase subunit omega (90 aa).

This sequence belongs to the RNA polymerase subunit omega family. The RNAP catalytic core consists of 2 alpha, 1 beta, 1 beta' and 1 omega subunit. When a sigma factor is associated with the core the holoenzyme is formed, which can initiate transcription.

The catalysed reaction is RNA(n) + a ribonucleoside 5'-triphosphate = RNA(n+1) + diphosphate. In terms of biological role, promotes RNA polymerase assembly. Latches the N- and C-terminal regions of the beta' subunit thereby facilitating its interaction with the beta and alpha subunits. The chain is DNA-directed RNA polymerase subunit omega from Alteromonas mediterranea (strain DSM 17117 / CIP 110805 / LMG 28347 / Deep ecotype).